Here is a 414-residue protein sequence, read N- to C-terminus: 2,3-diketo-5-methylthiopentyl-1-phosphate enolase (414 aa).

The active-site Proton acceptor is the lysine 99. Substrate contacts are provided by residues lysine 148, 174–177 (KDDE), histidine 265, glycine 338, and 360–361 (GG). Lysine 174, aspartate 176, and glutamate 177 together coordinate Mg(2+). An N6-carboxylysine modification is found at lysine 174.

It belongs to the RuBisCO large chain family. Type IV subfamily. In terms of assembly, homodimer. Mg(2+) serves as cofactor.

It catalyses the reaction 5-methylsulfanyl-2,3-dioxopentyl phosphate = 2-hydroxy-5-methylsulfanyl-3-oxopent-1-enyl phosphate. It participates in amino-acid biosynthesis; L-methionine biosynthesis via salvage pathway; L-methionine from S-methyl-5-thio-alpha-D-ribose 1-phosphate: step 3/6. Catalyzes the enolization of 2,3-diketo-5-methylthiopentyl-1-phosphate (DK-MTP-1-P) into 2-hydroxy-3-keto-5-methylthiopentenyl-1-phosphate (HK-MTPenyl-1-P). The chain is 2,3-diketo-5-methylthiopentyl-1-phosphate enolase from Bacillus cereus (strain ATCC 10987 / NRS 248).